The sequence spans 602 residues: Threonine--tRNA ligase (602 aa).

A catalytic region spans residues 208 to 499; it reads DHRKLGTELK…LTEHCAGEFP (292 aa). 3 residues coordinate Zn(2+): Cys300, His351, and His476.

The protein belongs to the class-II aminoacyl-tRNA synthetase family. Homodimer. Zn(2+) serves as cofactor.

Its subcellular location is the cytoplasm. It catalyses the reaction tRNA(Thr) + L-threonine + ATP = L-threonyl-tRNA(Thr) + AMP + diphosphate + H(+). Catalyzes the attachment of threonine to tRNA(Thr) in a two-step reaction: L-threonine is first activated by ATP to form Thr-AMP and then transferred to the acceptor end of tRNA(Thr). Also edits incorrectly charged L-seryl-tRNA(Thr). In Campylobacter jejuni (strain RM1221), this protein is Threonine--tRNA ligase.